The chain runs to 894 residues: Phosphoenolpyruvate carboxylase (894 aa).

Active-site residues include H143 and K556.

The protein belongs to the PEPCase type 1 family. The cofactor is Mg(2+).

It carries out the reaction oxaloacetate + phosphate = phosphoenolpyruvate + hydrogencarbonate. Its function is as follows. Forms oxaloacetate, a four-carbon dicarboxylic acid source for the tricarboxylic acid cycle. The sequence is that of Phosphoenolpyruvate carboxylase from Acinetobacter baumannii (strain ATCC 17978 / DSM 105126 / CIP 53.77 / LMG 1025 / NCDC KC755 / 5377).